The sequence spans 225 residues: Endoglucanase (225 aa).

The signal sequence occupies residues 1 to 15; it reads MKVFVVLAAIVAIAN. D29 acts as the Nucleophile in catalysis. 7 disulfides stabilise this stretch: C30–C152, C31–C66, C35–C103, C50–C74, C104–C219, C106–C209, and C176–C187. The N-linked (GlcNAc...) asparagine glycan is linked to N55. Catalysis depends on D138, which acts as the Proton donor.

It belongs to the glycosyl hydrolase 45 (cellulase K) family. N- and O-glycosylated. Contains hybrid- and complex-type N-glycans.

The protein resides in the secreted. It carries out the reaction Endohydrolysis of (1-&gt;4)-beta-D-glucosidic linkages in cellulose, lichenin and cereal beta-D-glucans.. Activity is not affected by metal ions except Mn(2+), which reduces the activity by 40-50%. However, no significant change in activity in response to 1 mM EDTA. Hydrolyzes carboxymethylcellulose (CMC). Also hydrolyzes lichenan and barley beta-1,4-D-glucan. CMC is hydrolyzed majorily to cellobiose (G2), cellotriose (G3) and cellotetraose (G4). Cellohexaose (G6) is hydrolyzed to G4 and G2 with traces of G3. Cellopentaose (G5) is completely hydrolyzed to G2 and G3, and G4 is partially hydrolyzed to G2. Does not hydrolyze G2 or G3. Does not hydrolyze crystalline cellulose, soluble starch, xylan, mannan or laminarin. This Cryptopygus antarcticus (Antarctic springtail) protein is Endoglucanase.